The following is a 235-amino-acid chain: MSNQLIYTGKAKDIYSTEDENVIKSVYKDQATMLNGARKETIKGKGVLNNQISSLIFEKLNAAGVATHFIERISDTEQLNKKVTIIPLEVVLRNVTAGSFSKRFGVEEGLDLKTPIVEFYYKNDDLDDPFINDEHVKFLDIANDEQIAYIKEETRRINELLKDWFEQIGLRLIDFKLEFGFDKDGKIILADEFSPDNCRLWDAEGHHMDKDVFRRDLGSLTDVYEVVLEKLQGLK.

Belongs to the SAICAR synthetase family.

It catalyses the reaction 5-amino-1-(5-phospho-D-ribosyl)imidazole-4-carboxylate + L-aspartate + ATP = (2S)-2-[5-amino-1-(5-phospho-beta-D-ribosyl)imidazole-4-carboxamido]succinate + ADP + phosphate + 2 H(+). It functions in the pathway purine metabolism; IMP biosynthesis via de novo pathway; 5-amino-1-(5-phospho-D-ribosyl)imidazole-4-carboxamide from 5-amino-1-(5-phospho-D-ribosyl)imidazole-4-carboxylate: step 1/2. This chain is Phosphoribosylaminoimidazole-succinocarboxamide synthase, found in Streptococcus thermophilus (strain CNRZ 1066).